The chain runs to 543 residues: MRVLPATLLVGAATAAAPPFQQILGLPKKGADTLAKPLHDLQEQLKTLSGEARHLWDEVANHFPNNMDHNPVFSLPKKHTRRPDSHWDHIVRGADVQSVWVTGASGEKEREIDGKLEAYDLRVKKTDPSALGIDPGVKQYTGYLDDNENDKHLFYWFFESRNDPKNDPVVLWLNGGPGCSSLTGLFLELGPSSINEKIKPIYNDFAWNSNASVIFLDQPVNVGYSYSGAAVSDTVAAGKDVYALLTLFFKQFPEYAKQDFHIAGESYAGHYIPVFASEILSHKKRNINLKSVLIGNGLTDGLTQYDYYRPMACGEGGYPAVLDEASCQSMDNALPRCKSMIESCYNTESSWICVPASIYCNNALLGPYQRTGQNVYDIRGKCEDTSNLCYKGMGYVSEYLNKREVREAVGAEVDGYESCNFDINRNFLFHGDWMKPYHRLVPGLLEQIPVLIYAGDADFICNWLGNKAWTEALEWPGQKEYAPLPLKDLVIEENEHKGKKIGQIKSHGNFTFMRLYGAGHMVPMDQPEASLEFFNRWLGGEWF.

The signal sequence occupies residues 1 to 17 (MRVLPATLLVGAATAAA). The propeptide occupies 18-124 (PPFQQILGLP…KLEAYDLRVK (107 aa)). Cystine bridges form between C179–C419, C313–C327, C337–C360, C344–C353, and C382–C389. An N-linked (GlcNAc...) asparagine glycan is attached at N210. The active site involves S266. Residue D458 is part of the active site. N509 carries N-linked (GlcNAc...) asparagine glycosylation. The active site involves H520.

This sequence belongs to the peptidase S10 family.

It localises to the vacuole. The enzyme catalyses Release of a C-terminal amino acid with broad specificity.. Functionally, vacuolar carboxypeptidase involved in degradation of small peptides. Digests preferentially peptides containing an aliphatic or hydrophobic residue in P1' position, as well as methionine, leucine or phenylalanine in P1 position of ester substrate. The chain is Carboxypeptidase Y homolog A (cpyA) from Neosartorya fischeri (strain ATCC 1020 / DSM 3700 / CBS 544.65 / FGSC A1164 / JCM 1740 / NRRL 181 / WB 181) (Aspergillus fischerianus).